We begin with the raw amino-acid sequence, 359 residues long: Uracil-DNA glycosylase (359 aa).

The N-terminal 21 residues, 1-21 (MWCMRRLPTNSVMTVARKRKQ), are a transit peptide targeting the mitochondrion. Asp162 (proton acceptor) is an active-site residue.

Belongs to the uracil-DNA glycosylase (UDG) superfamily. UNG family.

The protein localises to the mitochondrion. It is found in the nucleus. The enzyme catalyses Hydrolyzes single-stranded DNA or mismatched double-stranded DNA and polynucleotides, releasing free uracil.. Its function is as follows. Excises uracil residues from the DNA which can arise as a result of misincorporation of dUMP residues by DNA polymerase or due to deamination of cytosine. Not involved in strand-directed mismatch repair. The polypeptide is Uracil-DNA glycosylase (Saccharomyces cerevisiae (strain ATCC 204508 / S288c) (Baker's yeast)).